The following is a 214-amino-acid chain: UPF0301 protein blr1492 (214 aa).

Residues 1–22 (MAPTGKRTGESTRSTGPAPPSS) form a disordered region.

Belongs to the UPF0301 (AlgH) family.

In Bradyrhizobium diazoefficiens (strain JCM 10833 / BCRC 13528 / IAM 13628 / NBRC 14792 / USDA 110), this protein is UPF0301 protein blr1492.